Here is a 396-residue protein sequence, read N- to C-terminus: Penicillopepsin-1 (396 aa).

Positions 1–20 (MVVFSKVTASLACFSAVVSA) are cleaved as a signal peptide. Positions 21-72 (AAVPVKSPRQGFSVNQVQKTVTGTRTVNLPGVYANALAKYGATVPANVHAAA) are cleaved as a propeptide — activation peptide. The region spanning 88 to 393 (YLTPVKIGES…DAEGPRLGFA (306 aa)) is the Peptidase A1 domain. Residues Asp104 and Asp285 contribute to the active site. The N-linked (GlcNAc...) asparagine glycan is linked to Asn311. Cysteines 321 and 356 form a disulfide.

This sequence belongs to the peptidase A1 family. Monomer.

The protein localises to the secreted. The enzyme catalyses Hydrolysis of proteins with broad specificity similar to that of pepsin A, preferring hydrophobic residues at P1 and P1', but also cleaving 20-Gly-|-Glu-21 in the B chain of insulin. Clots milk, and activates trypsinogen.. In terms of biological role, secreted aspartic endopeptidase that allows assimilation of proteinaceous substrates. The scissile peptide bond is attacked by a nucleophilic water molecule activated by two aspartic residues in the active site. Shows a broad primary substrate specificity. Favors hydrophobic residues at the P1 and P1' positions, but can also activate trypsinogen and hydrolyze the B chain of insulin between positions 'Gly-20' and 'Glu-21'. The polypeptide is Penicillopepsin-1 (pepA) (Penicillium rubens (strain ATCC 28089 / DSM 1075 / NRRL 1951 / Wisconsin 54-1255) (Penicillium chrysogenum)).